The chain runs to 433 residues: Type I acyl-CoA thioesterase mpaH (433 aa).

The segment at 58–246 is abhydrolase domain; sequence HGVGLPKELY…VKARFDAAAD (189 aa). Position 60 (Val-60) interacts with substrate. Ser-139 acts as the Nucleophile in catalysis. A substrate-binding site is contributed by Phe-140. Residues Asp-163 and His-365 contribute to the active site.

The protein belongs to the AB hydrolase superfamily. MpaH hydrolase family. As to quaternary structure, homodimer.

The protein resides in the peroxisome matrix. It carries out the reaction mycophenolyl-CoA + H2O = mycophenolate + CoA + H(+). Its pathway is secondary metabolite biosynthesis; terpenoid biosynthesis. Its function is as follows. Type I acyl-CoA thioesterase; part of the gene cluster that mediates the biosynthesis of mycophenolic acid (MPA), the first isolated antibiotic natural product in the world obtained from a culture of Penicillium brevicompactum in 1893. MpaH acts as a peroxisomal acyl-CoA hydrolase that converts MPA-CoA into the final product MPA. The first step of the pathway is the synthesis of 5-methylorsellinic acid (5MOA) by the cytosolic polyketide synthase mpaC. 5MOA is then converted to the phthalide compound 5,7-dihydroxy-4,6-dimethylphthalide (DHMP) by the endoplasmic reticulum-bound cytochrome P450 monooxygenase mpaDE. MpaDE first catalyzes hydroxylation of 5-MOA to 4,6-dihydroxy-2-(hydroxymethyl)-3-methylbenzoic acid (DHMB). MpaDE then acts as a lactone synthase that catalyzes the ring closure to convert DHMB into DHMP. The next step is the prenylation of DHMP by the Golgi apparatus-associated prenyltransferase mpaA to yield farnesyl-DHMP (FDHMP). The ER-bound oxygenase mpaB then mediates the oxidative cleavage the C19-C20 double bond in FDHMP to yield FDHMP-3C via a mycophenolic aldehyde intermediate. The O-methyltransferase mpaG catalyzes the methylation of FDHMP-3C to yield MFDHMP-3C. After the cytosolic methylation of FDHMP-3C, MFDHMP-3C enters into peroxisomes probably via free diffusion due to its low molecular weight. Upon a peroxisomal CoA ligation reaction, catalyzed by a beta-oxidation component enzyme acyl-CoA ligase ACL891, MFDHMP-3C-CoA would then be restricted to peroxisomes for the following beta-oxidation pathway steps. The peroxisomal beta-oxidation machinery than converts MFDHMP-3C-CoA into MPA_CoA, via a beta-oxidation chain-shortening process. Finally mpaH acts as a peroxisomal acyl-CoA hydrolase with high substrate specificity toward MPA-CoA to release the final product MPA. The protein is Type I acyl-CoA thioesterase mpaH of Penicillium roqueforti (strain FM164).